We begin with the raw amino-acid sequence, 256 residues long: Neuroendocrine secretory protein 55 (256 aa).

An N-terminal signal peptide occupies residues 1-46 (MDRRSRAHQWRRARHNYNDLCPPIGRRAATALLWLSCSIALLRALA). Residues 61–256 (SFLNAHHRSA…RKGPIPIRRH (196 aa)) are disordered. Residues 86–103 (ESDHEHEEAEPELARPEC) are compositionally biased toward basic and acidic residues. 2 stretches are compositionally biased toward acidic residues: residues 104-139 (LEYD…ETEP) and 206-216 (LDEDPRDPEES). A compositionally biased stretch (basic residues) spans 225–236 (QPRRCKTRRPAR).

This sequence belongs to the NESP55 family. Post-translationally, binds keratan sulfate chains. In terms of processing, may be proteolytically processed to give rise to a number of active peptides.

The protein resides in the cytoplasmic vesicle. It localises to the secretory vesicle. It is found in the synaptic vesicle. Its subcellular location is the secreted. The protein is Neuroendocrine secretory protein 55 of Rattus norvegicus (Rat).